The chain runs to 229 residues: Demethylmenaquinone methyltransferase (229 aa).

S-adenosyl-L-methionine contacts are provided by residues T62, D80, 100–101 (DG), and S117.

It belongs to the class I-like SAM-binding methyltransferase superfamily. MenG/UbiE family.

It catalyses the reaction a 2-demethylmenaquinol + S-adenosyl-L-methionine = a menaquinol + S-adenosyl-L-homocysteine + H(+). It participates in quinol/quinone metabolism; menaquinone biosynthesis; menaquinol from 1,4-dihydroxy-2-naphthoate: step 2/2. Functionally, methyltransferase required for the conversion of demethylmenaquinol (DMKH2) to menaquinol (MKH2). The protein is Demethylmenaquinone methyltransferase of Corynebacterium kroppenstedtii (strain DSM 44385 / JCM 11950 / CIP 105744 / CCUG 35717).